The chain runs to 169 residues: uncharacterized protein (169 aa).

Helical transmembrane passes span 25 to 45, 57 to 77, and 91 to 111; these read ALMGLFEGGFVADLVLWMSYF, FFWVTLSLTQIITSIVAFGVF, and LFLIERIFTLVIGISAYFLMV.

This sequence belongs to the major facilitator superfamily. Allantoate permease family.

Its subcellular location is the membrane. This is an uncharacterized protein from Saccharomyces cerevisiae (strain ATCC 204508 / S288c) (Baker's yeast).